A 311-amino-acid chain; its full sequence is Malate dehydrogenase (311 aa).

NAD(+) is bound by residues glycine 7–glycine 13 and aspartate 34. Substrate contacts are provided by arginine 81 and arginine 87. NAD(+) is bound by residues asparagine 94 and isoleucine 117–asparagine 119. Substrate-binding residues include asparagine 119 and arginine 153. Histidine 177 functions as the Proton acceptor in the catalytic mechanism. Methionine 227 serves as a coordination point for NAD(+).

Belongs to the LDH/MDH superfamily. MDH type 1 family. In terms of assembly, homodimer.

It carries out the reaction (S)-malate + NAD(+) = oxaloacetate + NADH + H(+). Catalyzes the reversible oxidation of malate to oxaloacetate. The polypeptide is Malate dehydrogenase (Shewanella baltica (strain OS223)).